A 450-amino-acid chain; its full sequence is Phosphoglucosamine mutase (450 aa).

Ser-101 (phosphoserine intermediate) is an active-site residue. Residues Ser-101, Asp-243, Asp-245, and Asp-247 each contribute to the Mg(2+) site. Ser-101 bears the Phosphoserine mark.

This sequence belongs to the phosphohexose mutase family. Requires Mg(2+) as cofactor. Activated by phosphorylation.

The enzyme catalyses alpha-D-glucosamine 1-phosphate = D-glucosamine 6-phosphate. In terms of biological role, catalyzes the conversion of glucosamine-6-phosphate to glucosamine-1-phosphate. The polypeptide is Phosphoglucosamine mutase (Desulfotalea psychrophila (strain LSv54 / DSM 12343)).